The following is a 301-amino-acid chain: Methionyl-tRNA formyltransferase (301 aa).

109 to 112 (SLLP) provides a ligand contact to (6S)-5,6,7,8-tetrahydrofolate.

The protein belongs to the Fmt family.

The catalysed reaction is L-methionyl-tRNA(fMet) + (6R)-10-formyltetrahydrofolate = N-formyl-L-methionyl-tRNA(fMet) + (6S)-5,6,7,8-tetrahydrofolate + H(+). In terms of biological role, attaches a formyl group to the free amino group of methionyl-tRNA(fMet). The formyl group appears to play a dual role in the initiator identity of N-formylmethionyl-tRNA by promoting its recognition by IF2 and preventing the misappropriation of this tRNA by the elongation apparatus. This chain is Methionyl-tRNA formyltransferase, found in Jannaschia sp. (strain CCS1).